A 27-amino-acid chain; its full sequence is Pyruvate dehydrogenase protein X component, mitochondrial (27 aa).

Residues 1-27 (FRLSPAARNILEKHSLDASQGTATGPR) are disordered. One can recognise a Peripheral subunit-binding (PSBD) domain in the interval 2–27 (RLSPAARNILEKHSLDASQGTATGPR). Position 13 is an N6-acetyllysine (lysine 13). Serine 15 bears the Phosphoserine mark. A compositionally biased stretch (polar residues) spans 17 to 27 (DASQGTATGPR).

It belongs to the 2-oxoacid dehydrogenase family. Part of the inner core of the multimeric pyruvate dehydrogenase complex that is composed of about 48 DLAT and 12 PDHX molecules. This core binds multiple copies of pyruvate dehydrogenase (subunits PDH1A and PDHB, E1), dihydrolipoamide acetyltransferase (DLAT, E2) and lipoamide dehydrogenase (DLD, E3). Interacts with SIRT4. Interacts with DLD.

It localises to the mitochondrion matrix. Functionally, required for anchoring dihydrolipoamide dehydrogenase (E3) to the dihydrolipoamide transacetylase (E2) core of the pyruvate dehydrogenase complexes of eukaryotes. This specific binding is essential for a functional PDH complex. The sequence is that of Pyruvate dehydrogenase protein X component, mitochondrial from Mesocricetus auratus (Golden hamster).